A 422-amino-acid chain; its full sequence is MASFENSLSVLIVGAGLGGLAAAIALRRQGHVVKIYDSSSFKAELGAGLAVPPNTLRSLQQLGCNTENLNGVDNLCFTAMGYDGSVGMMNNMTDYREAYGTSWIMVHRVDLHNELMRVALDPGGLGPPATLHLNHRVTFCDVDACTVTFTNGTTQSADLIVGADGIRSTIRRFVLEEDVTVPASGIVGFRWLVQADALDPYPELDWIVKKPPLGARLISTPQNPQSGVGLADRRTIIIYACRGGTMVNVLAVHDDERDQNTADWSVPASKDDLFRVFHDYHPRFRRLLELAQDINLWQMRVVPVLKKWVNKRVCLLGDAAHASLPTLGQGFGMGLEDAVALGTLLPKGTTASQIETRLAVYEQLRKDRAEFVAAESYEEQYVPEMRGLYLRSKELRDRVMGYDIKVESEKVLETLLRSSNSA.

A helical membrane pass occupies residues 6-26 (NSLSVLIVGAGLGGLAAAIAL). Residues Ala50, Arg108, and Asp318 each coordinate FAD.

Belongs to the paxM FAD-dependent monooxygenase family. In terms of assembly, monomer. The cofactor is FAD.

Its subcellular location is the membrane. It carries out the reaction hispidin + NADH + O2 + H(+) = 3-hydroxyhispidin + NAD(+) + H2O. It catalyses the reaction hispidin + NADPH + O2 + H(+) = 3-hydroxyhispidin + NADP(+) + H2O. It participates in secondary metabolite biosynthesis. In terms of biological role, hispidin-3-hydroxylase; part of the gene cluster that mediates the fungal bioluminescence cycle. Hydroxylates hispidin in order to produce the fungal luciferin 3-hydroxyhispidin. The fungal bioluminescence cycle begins with the hispidin synthetase that catalyzes the formation of hispidin which is further hydroxylated by the hispidin-3-hydroxylase, yielding the fungal luciferin 3-hydroxyhispidin. The luciferase then produces an endoperoxide as a high-energy intermediate with decomposition that yields oxyluciferin (also known as caffeoylpyruvate) and light emission. Oxyluciferin can be recycled to caffeic acid by caffeoylpyruvate hydrolase. The protein is Hispidin-3-hydroxylase of Neonothopanus nambi (Agaricus nambi).